The sequence spans 174 residues: uncharacterized protein (174 aa).

Residues Thr137 to Glu174 form a disordered region.

This is an uncharacterized protein from Acanthamoeba polyphaga (Amoeba).